The primary structure comprises 294 residues: Protoheme IX farnesyltransferase 1 (294 aa).

Transmembrane regions (helical) follow at residues 8–28, 35–55, 82–102, 107–127, 132–152, 162–182, 208–228, 229–249, and 263–283; these read VTKP…FLLA, PWLM…GCAI, AMAA…LLIA, AAVF…SLYM, VYGT…GYCA, LILL…IAIF, IVLY…SGYT, GAAF…MALR, and QVFA…AVDY.

This sequence belongs to the UbiA prenyltransferase family. Protoheme IX farnesyltransferase subfamily.

Its subcellular location is the cell inner membrane. The catalysed reaction is heme b + (2E,6E)-farnesyl diphosphate + H2O = Fe(II)-heme o + diphosphate. Its pathway is porphyrin-containing compound metabolism; heme O biosynthesis; heme O from protoheme: step 1/1. Converts heme B (protoheme IX) to heme O by substitution of the vinyl group on carbon 2 of heme B porphyrin ring with a hydroxyethyl farnesyl side group. In Pseudoalteromonas translucida (strain TAC 125), this protein is Protoheme IX farnesyltransferase 1.